We begin with the raw amino-acid sequence, 233 residues long: Large ribosomal subunit protein uL1 (233 aa).

The protein belongs to the universal ribosomal protein uL1 family. As to quaternary structure, part of the 50S ribosomal subunit.

Binds directly to 23S rRNA. The L1 stalk is quite mobile in the ribosome, and is involved in E site tRNA release. Functionally, protein L1 is also a translational repressor protein, it controls the translation of the L11 operon by binding to its mRNA. This Shewanella sp. (strain MR-4) protein is Large ribosomal subunit protein uL1.